We begin with the raw amino-acid sequence, 351 residues long: Serine/threonine-protein kinase mos (351 aa).

The region spanning 71-340 is the Protein kinase domain; that stretch reads FSIDGVIGSG…ERRTDDTENL (270 aa). ATP-binding positions include 77–85 and Lys-98; that span reads IGSGGFGSV. Catalysis depends on Asp-194, which acts as the Proton acceptor.

This sequence belongs to the protein kinase superfamily. Ser/Thr protein kinase family.

The catalysed reaction is L-seryl-[protein] + ATP = O-phospho-L-seryl-[protein] + ADP + H(+). It carries out the reaction L-threonyl-[protein] + ATP = O-phospho-L-threonyl-[protein] + ADP + H(+). In terms of biological role, suppresses the mitotic cell cycle in oocytes, forcing them to undergo meiosis II to produce haploid gametes. Acts as a MAPK kinase kinase (MAP3K) that acts upstream of MAP kinase in oocytes. This is Serine/threonine-protein kinase mos from Patiria pectinifera (Starfish).